The chain runs to 971 residues: MELDEVIQGIVSAIGGFDYSDDEKVYVLGDEALACLKDLKRYLQVVDEKYKVWQIRSLLSSLQLVTNDICPILSDWDKDITNYRNWRIALACVELLVPLTWPLETEHETFRENVDVLYNLRQAQSNYKNSILSYKKGSVLSAILAVLLKPLSTPAESRTLRDKGIIRIVLLLFRNILQIDELKTKNETIISFAKAHILDLIVTLVSNLDEFEHFDVYILEIVYNLIRGCKPSALFSDASLTNSQTELNSLLLKESTQNRYLKRNAHTRHNRFGTMLSVQTEDRRFTIASQNIKTDGLDELDSHKRFRKRGTRRKHFDDINKSFFINTEAGTALRNFAVEFLEAGFNPLFQSLLKDLEREDPRVLPIHKMQLLYVQSFFLEFMRFSSKPKKTEEIYSNDYSFGLAASVFDQRALIMHNRLMVESFEMKQWSTFQASMLSMTQLLFTLRSMTLCSSEIYQRIADNLLSNIFYQEEILLLVYSALKHFKTQSFGYLDAITELTIVLLKELEKFSSAKQYLYVKKRRRNQKSVDSNVLESDEDEESSLINANAAVEDRLFDFGRYESRYCDNGCIDSFVLFLQCYQDLDSKQIHRAISFFYRIFVKQKCHVYLYRLDFLRVLDKMFNDHVYFSTTNSARQDFEQFFVYYMRKLSDALKDVPALFIELPFPKLTDTFYYLEYGKSPLFSIHGSRKGPLYETVPGLSHLEKVAAVVACLINENKSDLLDELKVQLNCLISERKLITLADENKYINEGGNDGERMGKNLKGDTDSFNTALLKDGKFRLLLELCGFEESDNNIDVQALWKLPNSVIIDELVEHAMLLRRFTDDPPTFEGTKPEDLLVRKQRGNVRLPSSSEGETSDEEIEFEADDPITFANRREALNKITDRKRKKMKTNETIIDHTTRKKKENHLRSAKYIVDSDDDSETDIAFFQSEAALREKNAQKASALFKRIDDLEMEGKLQEIEQLSENSSSD.

S528, S536, and S970 each carry phosphoserine.

As to quaternary structure, fork protection complex (FPC) consisting of swi1 and swi3 interacts with mat1 cis-acting sequences and mat1-proximal polar-terminator of replication (RTS1).

It localises to the nucleus. Its function is as follows. Forms a fork protection complex (FPC) with swi3. FPC coordinates leading and lagging strand synthesis and moves with the replication fork. It is required for programmed fork-pausing which is necessary for mating-type switching. FPC stabilizes replication forks in a configuration that is recognized by replication checkpoint sensors. It is involved in termination at the mat1-proximal polar-terminator of replication (RTS1) and also required for activation of the Rad53-like checkpoint kinase cds1. The sequence is that of Mating-type switching protein swi1 (swi1) from Schizosaccharomyces pombe (strain 972 / ATCC 24843) (Fission yeast).